A 92-amino-acid polypeptide reads, in one-letter code: Small ribosomal subunit protein bS20 (92 aa).

The interval 1–23 is disordered; the sequence is MANSPSAKKRAKQAEKRRSHNAS. Residues 7-20 are compositionally biased toward basic residues; sequence AKKRAKQAEKRRSH.

This sequence belongs to the bacterial ribosomal protein bS20 family.

Its function is as follows. Binds directly to 16S ribosomal RNA. The polypeptide is Small ribosomal subunit protein bS20 (Pseudomonas fluorescens (strain ATCC BAA-477 / NRRL B-23932 / Pf-5)).